We begin with the raw amino-acid sequence, 186 residues long: Lipid A palmitoyltransferase PagP (186 aa).

An N-terminal signal peptide occupies residues 1–25 (MNVSKYVAIFSFVFIQLISVGKVFA). Residues His58, Asp101, and Ser102 contribute to the active site.

Belongs to the lipid A palmitoyltransferase family. Homodimer.

It localises to the cell outer membrane. The catalysed reaction is lipid A (E. coli) + a 1-hexadecanoyl-2-acyl-sn-glycero-3-phosphocholine = hepta-acyl lipid A (E. coli) + a 2-acyl-sn-glycero-3-phosphocholine. It carries out the reaction lipid IIA + a 1-hexadecanoyl-2-acyl-sn-glycero-3-phosphocholine = lipid IIB + a 2-acyl-sn-glycero-3-phosphocholine. It catalyses the reaction lipid IVA (E. coli) + a 1-hexadecanoyl-2-acyl-sn-glycero-3-phosphocholine = lipid IVB (E. coli) + a 2-acyl-sn-glycero-3-phosphocholine. Functionally, transfers a palmitate residue from the sn-1 position of a phospholipid to the N-linked hydroxymyristate on the proximal unit of lipid A or its precursors. This chain is Lipid A palmitoyltransferase PagP, found in Escherichia coli (strain ATCC 55124 / KO11FL).